Reading from the N-terminus, the 290-residue chain is Glycine--tRNA ligase alpha subunit (290 aa).

Belongs to the class-II aminoacyl-tRNA synthetase family. As to quaternary structure, tetramer of two alpha and two beta subunits.

The protein resides in the cytoplasm. It catalyses the reaction tRNA(Gly) + glycine + ATP = glycyl-tRNA(Gly) + AMP + diphosphate. This is Glycine--tRNA ligase alpha subunit from Syntrophotalea carbinolica (strain DSM 2380 / NBRC 103641 / GraBd1) (Pelobacter carbinolicus).